The following is a 543-amino-acid chain: tRNA (guanine(37)-N(1))-methyltransferase (543 aa).

Residues 1–59 (MLKSLCFVIRPAIVSRPQFRLPTIARLSLRQFQNQPQSVGFFTMAPLETRALALSPSAT) constitute a mitochondrion transit peptide. S-adenosyl-L-methionine is bound by residues H282, 320–321 (DL), and 348–349 (DG). Residues 366-405 (DPAPPPKVSNRQRDREAKEARRKREQAKAAGQPVTETAPM) are disordered. N431 provides a ligand contact to S-adenosyl-L-methionine.

The protein belongs to the class I-like SAM-binding methyltransferase superfamily. TRM5/TYW2 family. As to quaternary structure, monomer.

Its subcellular location is the mitochondrion matrix. The protein resides in the nucleus. The protein localises to the cytoplasm. The catalysed reaction is guanosine(37) in tRNA + S-adenosyl-L-methionine = N(1)-methylguanosine(37) in tRNA + S-adenosyl-L-homocysteine + H(+). Its function is as follows. Specifically methylates the N1 position of guanosine-37 in various cytoplasmic and mitochondrial tRNAs. Methylation is not dependent on the nature of the nucleoside 5' of the target nucleoside. This is the first step in the biosynthesis of wybutosine (yW), a modified base adjacent to the anticodon of tRNAs and required for accurate decoding. This chain is tRNA (guanine(37)-N(1))-methyltransferase, found in Cryptococcus neoformans var. neoformans serotype D (strain JEC21 / ATCC MYA-565) (Filobasidiella neoformans).